A 360-amino-acid chain; its full sequence is UDP-N-acetylglucosamine--N-acetylmuramyl-(pentapeptide) pyrophosphoryl-undecaprenol N-acetylglucosamine transferase (360 aa).

UDP-N-acetyl-alpha-D-glucosamine contacts are provided by residues 12 to 14 (TAG), serine 198, and glutamine 289.

Belongs to the glycosyltransferase 28 family. MurG subfamily.

It is found in the cell membrane. It carries out the reaction Mur2Ac(oyl-L-Ala-gamma-D-Glu-L-Lys-D-Ala-D-Ala)-di-trans,octa-cis-undecaprenyl diphosphate + UDP-N-acetyl-alpha-D-glucosamine = beta-D-GlcNAc-(1-&gt;4)-Mur2Ac(oyl-L-Ala-gamma-D-Glu-L-Lys-D-Ala-D-Ala)-di-trans,octa-cis-undecaprenyl diphosphate + UDP + H(+). The protein operates within cell wall biogenesis; peptidoglycan biosynthesis. In terms of biological role, cell wall formation. Catalyzes the transfer of a GlcNAc subunit on undecaprenyl-pyrophosphoryl-MurNAc-pentapeptide (lipid intermediate I) to form undecaprenyl-pyrophosphoryl-MurNAc-(pentapeptide)GlcNAc (lipid intermediate II). In Streptococcus equi subsp. equi (strain 4047), this protein is UDP-N-acetylglucosamine--N-acetylmuramyl-(pentapeptide) pyrophosphoryl-undecaprenol N-acetylglucosamine transferase.